We begin with the raw amino-acid sequence, 592 residues long: V-type ATP synthase alpha chain (592 aa).

232–239 (GPFGSGKT) provides a ligand contact to ATP.

This sequence belongs to the ATPase alpha/beta chains family.

It carries out the reaction ATP + H2O + 4 H(+)(in) = ADP + phosphate + 5 H(+)(out). Its function is as follows. Produces ATP from ADP in the presence of a proton gradient across the membrane. The V-type alpha chain is a catalytic subunit. In Clostridioides difficile (strain 630) (Peptoclostridium difficile), this protein is V-type ATP synthase alpha chain.